Consider the following 119-residue polypeptide: Aspartate 1-decarboxylase (119 aa).

Serine 25 (schiff-base intermediate with substrate; via pyruvic acid) is an active-site residue. Serine 25 is subject to Pyruvic acid (Ser). Threonine 57 serves as a coordination point for substrate. Tyrosine 58 acts as the Proton donor in catalysis. Glycine 73 to alanine 75 contacts substrate.

This sequence belongs to the PanD family. In terms of assembly, heterooctamer of four alpha and four beta subunits. Pyruvate serves as cofactor. Is synthesized initially as an inactive proenzyme, which is activated by self-cleavage at a specific serine bond to produce a beta-subunit with a hydroxyl group at its C-terminus and an alpha-subunit with a pyruvoyl group at its N-terminus.

The protein localises to the cytoplasm. The enzyme catalyses L-aspartate + H(+) = beta-alanine + CO2. It functions in the pathway cofactor biosynthesis; (R)-pantothenate biosynthesis; beta-alanine from L-aspartate: step 1/1. In terms of biological role, catalyzes the pyruvoyl-dependent decarboxylation of aspartate to produce beta-alanine. This chain is Aspartate 1-decarboxylase, found in Thermosipho melanesiensis (strain DSM 12029 / CIP 104789 / BI429).